Consider the following 404-residue polypeptide: DNA polymerase processivity factor BMRF1 (404 aa).

Residues 1–300 (METTQTLRFK…SVILFNHASE (300 aa)) are homodimerization; DNA binding and DNA polymerase processivity. Residues 301–404 (EAAASTASEP…KVKQAFNPLI (104 aa)) form a transcriptional activation region. The segment at 302–404 (AAASTASEPE…KVKQAFNPLI (103 aa)) is disordered. A compositionally biased stretch (pro residues) spans 335 to 344 (SPSPPPPPRT). Ser337 bears the Phosphoserine mark. A Phosphothreonine modification is found at Thr344. Ser349 carries the phosphoserine modification. Thr355 carries the post-translational modification Phosphothreonine.

It belongs to the herpesviridae DNA polymerase accessory subunit family. In terms of assembly, homodimer. Two dimers can adopt a tetrameric ring-like structure. Forms a complex with the DNA-binding protein BALF2, the DNA polymerase subunit BALF5, and the alkaline exonuclease BGLF5. Interacts (via N-terminus) with BZLF1 (via bZIP domain); this interaction may inhibit BZLF1-induced transcription of the BMRF1 promoter. Interacts (via C-terminus) with host NuRD complex; this interaction is important for transcriptional activation of EBV promoters and inhibition of the ubiquitination step of DDR signaling. In terms of processing, phosphorylated by the viral BGLF4 kinase.

It is found in the virion tegument. The protein localises to the host nucleus. In terms of biological role, acts as a DNA polymerase processivity factor; a transcriptional activator for several EBV promoters and inhibits the host DNA damage response (DDR) to double-stranded DNA breaks. Plays an essential role in the viral lytic DNA replication by acting as a polymerase accessory subunit. Stimulates the viral DNA polymerase activity and appears to function with it as a holoenzyme. Increases the processivity of the viral polymerase, probably by acting as a sliding clamp that prevents dissociation of the polymerase from the active template. In addition, BMRF1 transcriptionally activates the oriLyt early BHLF1 promoter. Promotes G1/S cell cycle arrest through p53 induction. This is DNA polymerase processivity factor BMRF1 from Epstein-Barr virus (strain AG876) (HHV-4).